A 252-amino-acid polypeptide reads, in one-letter code: Triosephosphate isomerase (252 aa).

9–11 provides a ligand contact to substrate; it reads NWK. His98 functions as the Electrophile in the catalytic mechanism. Glu170 (proton acceptor) is an active-site residue. 2 residues coordinate substrate: Gly176 and Ser215.

The protein belongs to the triosephosphate isomerase family. In terms of assembly, homodimer.

It localises to the cytoplasm. The enzyme catalyses D-glyceraldehyde 3-phosphate = dihydroxyacetone phosphate. Its pathway is carbohydrate biosynthesis; gluconeogenesis. The protein operates within carbohydrate degradation; glycolysis; D-glyceraldehyde 3-phosphate from glycerone phosphate: step 1/1. In terms of biological role, involved in the gluconeogenesis. Catalyzes stereospecifically the conversion of dihydroxyacetone phosphate (DHAP) to D-glyceraldehyde-3-phosphate (G3P). This chain is Triosephosphate isomerase, found in Buchnera aphidicola subsp. Baizongia pistaciae (strain Bp).